Reading from the N-terminus, the 335-residue chain is DNA-directed RNA polymerases I and III subunit RPAC1 (335 aa).

S2 is modified (N-acetylserine). A Phosphoserine modification is found at S17.

This sequence belongs to the archaeal Rpo3/eukaryotic RPB3 RNA polymerase subunit family. As to quaternary structure, component of the RNA polymerase I (Pol I) complex consisting of 14 subunits: RPA135, RPA190, RPC40, RPA14, RPB5, RPO26, RPA43, RPB8, RPA12, RPB10, RPC19, RPC10, RPA49 and RPA34. The complex is composed of a horseshoe-shaped core containing ten subunits (RPA135, RPA190, RPB5, RPO26, RPB8, RPB10, RPC10, RPA12, RPC19 and RPC40) where RPA135 and RPA190 form the DNA-binding cleft. Outside of the core, RPA14 and RPA43 form the stalk that mediates interactions with transcription initiation factors and newly synthesized RNA. Component of the RNA polymerase III (Pol III) complex consisting of at least 17 subunits. Interacts with the RPC19/RPAC2 and RPC53/RPC4. Interacts with retrotransposons Ty integrase, targeting Ty1, Ty2 and Ty4 integration upstream of pol III-transcribed genes.

It localises to the nucleus. The protein localises to the nucleolus. In terms of biological role, DNA-dependent RNA polymerases catalyze the transcription of DNA into RNA using the four ribonucleoside triphosphates as substrates. Common component of RNA polymerases I (Pol I) and III (Pol III) which synthesize ribosomal RNA precursors and small RNAs, such as 5S rRNA and tRNAs, respectively. RPC40 is part of the polymerase core and may function as a clamp element that moves to open and close the cleft. Plays an important role in targeting retrotransposons Ty integration upstream of pol III-transcribed genes such as tRNA genes, allowing Ty1, Ty2 and Ty4 to proliferate and yet minimizing genetic damage. This is DNA-directed RNA polymerases I and III subunit RPAC1 from Saccharomyces cerevisiae (strain ATCC 204508 / S288c) (Baker's yeast).